The following is a 54-amino-acid chain: UPF0181 protein APJL_0874 (54 aa).

It belongs to the UPF0181 family.

The polypeptide is UPF0181 protein APJL_0874 (Actinobacillus pleuropneumoniae serotype 3 (strain JL03)).